The following is a 929-amino-acid chain: Isoleucine--tRNA ligase (929 aa).

The 'HIGH' region motif lies at 58 to 68 (PYANGDIHIGH). Glu563 serves as a coordination point for L-isoleucyl-5'-AMP. A 'KMSKS' region motif is present at residues 605 to 609 (KMSKS). Lys608 is an ATP binding site. Residues Cys892, Cys895, Cys912, and Cys915 each coordinate Zn(2+).

This sequence belongs to the class-I aminoacyl-tRNA synthetase family. IleS type 1 subfamily. In terms of assembly, monomer. It depends on Zn(2+) as a cofactor.

Its subcellular location is the cytoplasm. The enzyme catalyses tRNA(Ile) + L-isoleucine + ATP = L-isoleucyl-tRNA(Ile) + AMP + diphosphate. In terms of biological role, catalyzes the attachment of isoleucine to tRNA(Ile). As IleRS can inadvertently accommodate and process structurally similar amino acids such as valine, to avoid such errors it has two additional distinct tRNA(Ile)-dependent editing activities. One activity is designated as 'pretransfer' editing and involves the hydrolysis of activated Val-AMP. The other activity is designated 'posttransfer' editing and involves deacylation of mischarged Val-tRNA(Ile). The chain is Isoleucine--tRNA ligase from Neisseria meningitidis serogroup B (strain ATCC BAA-335 / MC58).